The sequence spans 401 residues: Exodeoxyribonuclease 7 large subunit (401 aa).

Belongs to the XseA family. In terms of assembly, heterooligomer composed of large and small subunits.

The protein localises to the cytoplasm. The catalysed reaction is Exonucleolytic cleavage in either 5'- to 3'- or 3'- to 5'-direction to yield nucleoside 5'-phosphates.. In terms of biological role, bidirectionally degrades single-stranded DNA into large acid-insoluble oligonucleotides, which are then degraded further into small acid-soluble oligonucleotides. In Clostridium botulinum (strain Langeland / NCTC 10281 / Type F), this protein is Exodeoxyribonuclease 7 large subunit.